The sequence spans 284 residues: MKKLTTLLLASTLLIAACGNDDSKKDDSKTSKKDDGVKAELKQATKAYDKYTDEQLNEFLKGTEKFVKAIENNDMAQAKALYPKVRMYYERSEPVAEAFGDLDPKIDARLADMKEEKKEKEWSGYHKIEKALYEDKKIDDVTKKDAQQLLKDAKELHAKADTLDIIPKLMLQGSVDLLNEVATSKITGEEEIYSHTDLYDFKANVEGAQKIYDLFKPILEKKDKKLSDDIQMNFDKVNQLLDKYKDNNGGYESFEKVSKKDRKAFADAVNALGEPLSKMAVITE.

A signal peptide spans 1-17; sequence MKKLTTLLLASTLLIAA. The N-palmitoyl cysteine moiety is linked to residue C18. C18 carries S-diacylglycerol cysteine lipidation.

Belongs to the EfeM/EfeO family.

The protein localises to the cell membrane. In Staphylococcus aureus (strain USA300), this protein is Efem/EfeO family lipoprotein.